The chain runs to 72 residues: UPF0150 protein ssl0738 (72 aa).

The protein belongs to the UPF0150 family.

The polypeptide is UPF0150 protein ssl0738 (Synechocystis sp. (strain ATCC 27184 / PCC 6803 / Kazusa)).